Consider the following 343-residue polypeptide: Serpentine receptor class alpha-11 (343 aa).

Over 1-24 (MSSPDTPVCASPQQMEMYNSHFYT) the chain is Extracellular. The helical transmembrane segment at 25 to 45 (CALFFNLLIAFTSMTLIIMAI) threads the bilayer. The Cytoplasmic segment spans residues 46–60 (RKLLTESIINTSTRM). A helical transmembrane segment spans residues 61 to 81 (FLIVGLLCCSLHQTAYIVLRV). At 82-106 (QVIFQILFKLDQPCKLYYKAYDCKY) the chain is on the extracellular side. Residues 107-127 (VTFSLVAGNTGMIFIQSAMTI) form a helical membrane-spanning segment. Over 128-146 (DRILTTVFTNLWPKLKYWP) the chain is Cytoplasmic. Residues 147-167 (GVILSSFMIGCNFTNVQFIFW) traverse the membrane as a helical segment. At 168 to 192 (NDPLTDYVPTCGQFPPKSVGRFQKF) the chain is on the extracellular side. The chain crosses the membrane as a helical span at residues 193-213 (LEIALYMSLAHMVINVIILYI). The Cytoplasmic segment spans residues 214 to 247 (NVVQDRRQRLVSTHDQSQSFDVNQRFQSRVALKS). A helical transmembrane segment spans residues 248-268 (TQAIFFLSMSQFLSCFLYTIF). Residues 269–291 (TKLYLTLQPDMTPLQSGLTLALT) are Extracellular-facing. A helical transmembrane segment spans residues 292–312 (YTTPYACIAIPSLIMVTLTFI). Over 313–343 (RNQRHRSINALRSQTETGDQYMQKIKKIWDK) the chain is Cytoplasmic.

It belongs to the nematode receptor-like protein sra family.

The protein localises to the membrane. A G protein-coupled receptor required for olfactory imprinting a requisite in ordorant response such as benzaldehyde and isoamylalcohol. This chain is Serpentine receptor class alpha-11, found in Caenorhabditis briggsae.